A 53-amino-acid chain; its full sequence is Photoreceptor disk component PRCD (53 aa).

Cys2 is lipidated: S-palmitoyl cysteine. The tract at residues 24 to 53 is disordered; the sequence is PEPSRVDGTVVGSGSDTDLQSTGREKGPVK. Residues 35–45 show a composition bias toward polar residues; that stretch reads GSGSDTDLQST.

It belongs to the PRCD family. As to quaternary structure, interacts with RHO/rhodopsin; the interaction promotes PRCD stability. In terms of processing, palmitoylated at Cys-2. Palmitoylation is essential for protein stability and trafficking to the photoreceptor outer segment, but does not appear to be essential for membrane localization. Probably palmitoylated by ZDHHC3. Post-translationally, phosphorylated. As to expression, expressed in retina, where it localizes to both rod and cone photoreceptors (at protein level).

It localises to the cell projection. Its subcellular location is the cilium. It is found in the photoreceptor outer segment. The protein localises to the membrane. The protein resides in the endoplasmic reticulum. It localises to the golgi apparatus. Involved in vision. The protein is Photoreceptor disk component PRCD of Mus musculus (Mouse).